Here is a 431-residue protein sequence, read N- to C-terminus: Enolase (431 aa).

Glutamine 167 provides a ligand contact to (2R)-2-phosphoglycerate. Glutamate 209 functions as the Proton donor in the catalytic mechanism. Mg(2+)-binding residues include aspartate 246, glutamate 289, and aspartate 316. The (2R)-2-phosphoglycerate site is built by lysine 341, arginine 370, serine 371, and lysine 392. The active-site Proton acceptor is the lysine 341.

This sequence belongs to the enolase family. In terms of assembly, component of the RNA degradosome, a multiprotein complex involved in RNA processing and mRNA degradation. It depends on Mg(2+) as a cofactor.

It localises to the cytoplasm. The protein resides in the secreted. Its subcellular location is the cell surface. The enzyme catalyses (2R)-2-phosphoglycerate = phosphoenolpyruvate + H2O. The protein operates within carbohydrate degradation; glycolysis; pyruvate from D-glyceraldehyde 3-phosphate: step 4/5. In terms of biological role, catalyzes the reversible conversion of 2-phosphoglycerate (2-PG) into phosphoenolpyruvate (PEP). It is essential for the degradation of carbohydrates via glycolysis. The protein is Enolase of Shewanella halifaxensis (strain HAW-EB4).